The chain runs to 118 residues: Thioredoxin H-type (118 aa).

The region spanning 2 to 114 (AAEEGQVIGC…LQQTIAKHMA (113 aa)) is the Thioredoxin domain. Residues Cys40 and Cys43 each act as nucleophile in the active site. A disulfide bridge connects residues Cys40 and Cys43.

The protein belongs to the thioredoxin family. Plant H-type subfamily.

It localises to the cytoplasm. In terms of biological role, participates in various redox reactions through the reversible oxidation of the active center dithiol to a disulfide. The H form is known to activate a number of cytosolic enzymes. This chain is Thioredoxin H-type, found in Ricinus communis (Castor bean).